A 152-amino-acid polypeptide reads, in one-letter code: MKISKKRRQELIRKIIHEKKISNQFQIVEELKKYGIKAVQPTVARDLKEIGAVKIMDESGNYVYKLLDETPVIDPWKELKRNFKSFVESIDRAGNLIVIKTIPGTASGIARVIDRLDIDEIVGTLAGDDTIFVAVRDPESCEKIVEKLSSIL.

The protein belongs to the ArgR family.

The protein resides in the cytoplasm. It participates in amino-acid biosynthesis; L-arginine biosynthesis [regulation]. Its function is as follows. Regulates arginine biosynthesis genes. This chain is Arginine repressor, found in Thermotoga sp. (strain RQ2).